The chain runs to 550 residues: Hydroxylamine reductase (550 aa).

The [2Fe-2S] cluster site is built by Cys3, Cys6, Cys18, and Cys25. His249, Glu273, Cys317, Cys405, Cys433, Cys458, Glu492, and Lys494 together coordinate hybrid [4Fe-2O-2S] cluster. The residue at position 405 (Cys405) is a Cysteine persulfide.

The protein belongs to the HCP family. It depends on [2Fe-2S] cluster as a cofactor. Hybrid [4Fe-2O-2S] cluster is required as a cofactor.

It is found in the cytoplasm. It carries out the reaction A + NH4(+) + H2O = hydroxylamine + AH2 + H(+). Catalyzes the reduction of hydroxylamine to form NH(3) and H(2)O. This Salmonella schwarzengrund (strain CVM19633) protein is Hydroxylamine reductase.